We begin with the raw amino-acid sequence, 147 residues long: Hemoglobin subunit delta (147 aa).

The Globin domain occupies 3–147; that stretch reads NLTAAEKTQV…VANALAHKYH (145 aa). Residues His64 and His93 each coordinate heme b.

The protein belongs to the globin family. Heterotetramer of two delta chains and two alpha chains. In terms of tissue distribution, red blood cells.

The polypeptide is Hemoglobin subunit delta (HBD) (Loxodonta africana (African elephant)).